The following is a 386-amino-acid chain: Acetylornithine aminotransferase (386 aa).

Residues 96 to 97 (GA) and F123 each bind pyridoxal 5'-phosphate. R126 lines the N(2)-acetyl-L-ornithine pocket. Residue 208–211 (DEVQ) coordinates pyridoxal 5'-phosphate. K237 carries the post-translational modification N6-(pyridoxal phosphate)lysine. Residue S265 coordinates N(2)-acetyl-L-ornithine. Pyridoxal 5'-phosphate is bound at residue T266.

This sequence belongs to the class-III pyridoxal-phosphate-dependent aminotransferase family. ArgD subfamily. As to quaternary structure, homodimer. It depends on pyridoxal 5'-phosphate as a cofactor.

The protein resides in the cytoplasm. It catalyses the reaction N(2)-acetyl-L-ornithine + 2-oxoglutarate = N-acetyl-L-glutamate 5-semialdehyde + L-glutamate. Its pathway is amino-acid biosynthesis; L-arginine biosynthesis; N(2)-acetyl-L-ornithine from L-glutamate: step 4/4. The polypeptide is Acetylornithine aminotransferase (Bacillus anthracis).